Consider the following 921-residue polypeptide: Probable dipeptidyl-aminopeptidase B (921 aa).

The disordered stretch occupies residues 1 to 33; it reads MAGHTEENAQLLSTEQESVSRHSSDSAASTAST. At 1 to 109 the chain is on the cytoplasmic side; sequence MAGHTEENAQ…NKSVDKKLRK (109 aa). Polar residues predominate over residues 8-17; sequence NAQLLSTEQE. A helical; Signal-anchor for type II membrane protein transmembrane segment spans residues 110–130; it reads LIWIVGGVFIGAWVLALFIFL. At 131-921 the chain is on the vacuolar side; it reads GKQAYKHSSE…VPLQIDAAKV (791 aa). A glycan (N-linked (GlcNAc...) asparagine) is linked at Asn-362. The active-site Charge relay system is Ser-768. Asn-822 carries N-linked (GlcNAc...) asparagine glycosylation. Active-site charge relay system residues include Asp-845 and His-878.

It belongs to the peptidase S9B family.

Its subcellular location is the vacuole membrane. It catalyses the reaction Release of an N-terminal dipeptide, Xaa-Yaa-|-Zaa-, from a polypeptide, preferentially when Yaa is Pro, provided Zaa is neither Pro nor hydroxyproline.. In terms of biological role, type IV dipeptidyl-peptidase which removes N-terminal dipeptides sequentially from polypeptides having unsubstituted N-termini provided that the penultimate residue is proline. In Sclerotinia sclerotiorum (strain ATCC 18683 / 1980 / Ss-1) (White mold), this protein is Probable dipeptidyl-aminopeptidase B (dapB).